Reading from the N-terminus, the 127-residue chain is Cliotide T3 (127 aa).

An N-terminal signal peptide occupies residues 1–24; it reads MAYVRLTSLAVLFFLAASVMKTEG. A cross-link (cyclopeptide (Gly-Asn)) is located at residues 25–53; the sequence is GLPTCGETCTLGTCYVPDCSCSWPICMKN. Intrachain disulfides connect Cys-29/Cys-43, Cys-33/Cys-45, and Cys-38/Cys-50. Positions 54–127 are cleaved as a propeptide — removed in mature form; the sequence is HIIAANAKTV…DLKMPLESTN (74 aa).

Contains 3 disulfide bonds. In terms of processing, this is a cyclic peptide. Expressed in flower, stem, shoot, leaf and seed but not in root, pod and nodule (at protein level).

Its function is as follows. Probably participates in a plant defense mechanism. Not active against Gram-negative bacteria E.coli ATCC 700926, K.pneumoniae ATTC 13883 and P.aeruginosa ATCC 39018 at concentration up to 100 uM. Has cytotoxic and hemolytic activity. In Clitoria ternatea (Butterfly pea), this protein is Cliotide T3.